Consider the following 336-residue polypeptide: Dihydroorotate dehydrogenase (quinone) (336 aa).

Residues 62 to 66 and T86 each bind FMN; that span reads AGLDK. K66 is a substrate binding site. 111 to 115 contacts substrate; it reads NRMGF. The FMN site is built by N139 and N172. N172 provides a ligand contact to substrate. S175 serves as the catalytic Nucleophile. N177 is a substrate binding site. 2 residues coordinate FMN: K217 and T245. 246–247 contributes to the substrate binding site; it reads NT. FMN-binding positions include G268, G297, and 318–319; that span reads YS.

This sequence belongs to the dihydroorotate dehydrogenase family. Type 2 subfamily. In terms of assembly, monomer. FMN is required as a cofactor.

It is found in the cell membrane. The enzyme catalyses (S)-dihydroorotate + a quinone = orotate + a quinol. Its pathway is pyrimidine metabolism; UMP biosynthesis via de novo pathway; orotate from (S)-dihydroorotate (quinone route): step 1/1. Functionally, catalyzes the conversion of dihydroorotate to orotate with quinone as electron acceptor. The sequence is that of Dihydroorotate dehydrogenase (quinone) from Salmonella arizonae (strain ATCC BAA-731 / CDC346-86 / RSK2980).